The sequence spans 259 residues: GEM-like protein 1 (259 aa).

Basic and acidic residues predominate over residues 1-11; the sequence is MSGQENHDHGR. Positions 1–79 are disordered; it reads MSGQENHDHG…PSPAPRNTMD (79 aa). The span at 13-30 shows a compositional bias: low complexity; sequence SSTPAAASEPSKAAAHSS. Residues 138 to 215 form the GRAM domain; sequence KVFKQTFDCL…NQLKAVNPST (78 aa).

Belongs to the GEM family. As to quaternary structure, interacts with AFH1.

The sequence is that of GEM-like protein 1 (FIP1) from Arabidopsis thaliana (Mouse-ear cress).